Reading from the N-terminus, the 396-residue chain is 8-amino-7-oxononanoate synthase (396 aa).

Substrate is bound at residue Arg19. 106-107 provides a ligand contact to pyridoxal 5'-phosphate; that stretch reads GY. His131 lines the substrate pocket. Positions 176, 204, and 233 each coordinate pyridoxal 5'-phosphate. Lys236 is subject to N6-(pyridoxal phosphate)lysine. Substrate is bound at residue Thr350.

The protein belongs to the class-II pyridoxal-phosphate-dependent aminotransferase family. BioF subfamily. As to quaternary structure, homodimer. The cofactor is pyridoxal 5'-phosphate.

It catalyses the reaction 6-carboxyhexanoyl-[ACP] + L-alanine + H(+) = (8S)-8-amino-7-oxononanoate + holo-[ACP] + CO2. It functions in the pathway cofactor biosynthesis; biotin biosynthesis. Its function is as follows. Catalyzes the decarboxylative condensation of pimeloyl-[acyl-carrier protein] and L-alanine to produce 8-amino-7-oxononanoate (AON), [acyl-carrier protein], and carbon dioxide. The protein is 8-amino-7-oxononanoate synthase of Pseudomonas savastanoi pv. phaseolicola (strain 1448A / Race 6) (Pseudomonas syringae pv. phaseolicola (strain 1448A / Race 6)).